Consider the following 653-residue polypeptide: Epithelial sodium channel subunit gamma (653 aa).

Topologically, residues 1–54 (MGHGRRISESIKKQLPVTGPEAPTVKNLMDWYLNNTNTHGCRRIAVSRGYLRRW) are cytoplasmic. Residues 55-75 (IWICFTVSSVGMIFWQWTLLL) traverse the membrane as a helical segment. Topologically, residues 76 to 546 (MSYYTVSVSV…GGQLGLWMSC (471 aa)) are extracellular. 8 disulfides stabilise this stretch: C100–C290, C214–C221, C267–C274, C379–C464, C401–C460, C405–C456, C414–C441, and C416–C430. Residues 547 to 567 (SIVCFLEMWEVFLVDILTIIA) traverse the membrane as a helical segment. Residues 568–653 (RYWLHRGRQW…DEQVSDTEVN (86 aa)) lie on the Cytoplasmic side of the membrane. The interval 582–608 (KERQMQQPSPPDHDTGHHNPVCIDDED) is disordered.

Belongs to the amiloride-sensitive sodium channel (TC 1.A.6) family. SCNN1G subfamily. As to quaternary structure, component of the heterotrimeric epithelial sodium channel (ENaC) composed of an alpha/SCNN1A, a beta/SCNN1B and a gamma/SCNN1G subunit. In terms of tissue distribution, strongly expressed in gill, liver, kidney and rectum and more weakly in heart, muscle and intestine.

It localises to the apical cell membrane. It carries out the reaction Na(+)(in) = Na(+)(out). Its activity is regulated as follows. Originally identified and characterized by its inhibition by the diuretic drug amiloride. This is one of the three pore-forming subunits of the heterotrimeric epithelial sodium channel (ENaC), a critical regulator of sodium balance and fluid homeostasis. ENaC operates in epithelial tissues, where it mediates the electrodiffusion of sodium ions from extracellular fluid through the apical membrane of cells, with water following osmotically. In Neoceratodus forsteri (Australian lungfish), this protein is Epithelial sodium channel subunit gamma.